The following is a 710-amino-acid chain: Amyloid beta precursor protein binding family B member 1 (710 aa).

Positions 1-15 are enriched in polar residues; sequence MSVPSSLSQSAINAN. 4 disordered regions span residues 1–24, 131–254, 276–299, and 340–365; these read MSVP…ALSL, GLRG…TDSD, GTTQ…EESQ, and TFPA…NTNP. Residues 145–173 are compositionally biased toward acidic residues; sequence GPDEGEEKAAGEAEEEEEDDDDEEEEEDL. Lys-204 carries the N6-acetyllysine modification. Residues 223 to 234 show a composition bias toward polar residues; it reads SWATLSQGSPSY. Residues 253–285 form the WW domain; sequence SDLPAGWMRVQDTSGTYYWHIPTGTTQWEPPGR. The span at 287 to 299 shows a compositional bias: low complexity; sequence SPSQGSSPQEESQ. Positions 370-509 constitute a PID 1 domain; sequence FAVRSLGWVE…SKIMAERRNA (140 aa). Ser-459 carries the phosphoserine; by PKC modification. Ser-517 bears the Phosphoserine mark. Residues 542 to 699 form the PID 2 domain; sequence KFQVYYLGNV…RRGVQSLWGS (158 aa). Tyr-547 carries the phosphotyrosine; by ABL1 modification. Ser-610 carries the phosphoserine; by SGK1 modification. An N6-acetyllysine modification is found at Lys-701.

In terms of assembly, component of a complex, at least composed of APBB1, RASD1/DEXRAS1 and APP. Interacts (via PID domain 2) with APP (with the intracellular domain of the amyloid-beta precursor protein). Interacts (via PID domain 2) with RASD1/DEXRAS1; impairs the transcription activation activity. Interacts (via PID domain 1) with KAT5/TIP60. Interacts (via the WW domain) with the proline-rich region of APBB1IP. Interacts with TSHZ1 and TSHZ2. Interacts (via the WW domain) with histone H2AX (when phosphorylated on 'Tyr-142') and the proline-rich region of ENAH. Interacts with MAPK8. Interacts (via PID domain 1) with TSHZ3 (via homeobox domain). Interacts with SET. Found in a trimeric complex with HDAC1 and TSHZ3; the interaction between HDAC1 and APBB1 is mediated by TSHZ3. Interacts (via WWW domain) with NEK6. Interacts (via WWW domain) with ABL1. Interacts with RNF157. Interacts with ARF6. In terms of processing, phosphorylation at Ser-610 by SGK1 promotes its localization to the nucleus. Phosphorylated following nuclear translocation. Phosphorylation at Tyr-547 by ABL1 enhances transcriptional activation activity and reduces the affinity for RASD1/DEXRAS1. Phosphorylated at Ser-459 by PKC upon insulin activation. Post-translationally, acetylation at Lys-204 and Lys-701 by KAT5 promotes its transcription activator activity. Polyubiquitination by RNF157 leads to degradation by the proteasome. As to expression, highly expressed in brain; strongly reduced in post-mortem elderly subjects with Alzheimer disease. In terms of tissue distribution, expressed preferentially in the brain.

The protein localises to the cell membrane. It is found in the cytoplasm. Its subcellular location is the nucleus. The protein resides in the cell projection. It localises to the growth cone. The protein localises to the nucleus speckle. Transcription coregulator that can have both coactivator and corepressor functions. Adapter protein that forms a transcriptionally active complex with the gamma-secretase-derived amyloid precursor protein (APP) intracellular domain. Plays a central role in the response to DNA damage by translocating to the nucleus and inducing apoptosis. May act by specifically recognizing and binding histone H2AX phosphorylated on 'Tyr-142' (H2AXY142ph) at double-strand breaks (DSBs), recruiting other pro-apoptosis factors such as MAPK8/JNK1. Required for histone H4 acetylation at double-strand breaks (DSBs). Its ability to specifically bind modified histones and chromatin modifying enzymes such as KAT5/TIP60, probably explains its transcription activation activity. Functions in association with TSHZ3, SET and HDAC factors as a transcriptional repressor, that inhibits the expression of CASP4. Associates with chromatin in a region surrounding the CASP4 transcriptional start site(s). Involved in hippocampal neurite branching and neuromuscular junction formation, as a result plays a role in spatial memory functioning. Plays a role in the maintenance of lens transparency. May play a role in muscle cell strength. Acts as a molecular adapter that functions in neurite outgrowth by activating the RAC1-ARF6 axis upon insulin treatment. The sequence is that of Amyloid beta precursor protein binding family B member 1 from Homo sapiens (Human).